The sequence spans 426 residues: Inositol hexakisphosphate kinase 2 (426 aa).

Residues 207–209 and Asp-220 contribute to the ATP site; that span reads ENL. Residues Lys-222 and 236–243 each bind substrate; that span reads KAANQIRK. ATP is bound at residue Asp-383. His-386 serves as a coordination point for substrate.

It belongs to the inositol phosphokinase (IPK) family.

It is found in the nucleus. The catalysed reaction is 1D-myo-inositol hexakisphosphate + ATP = 5-diphospho-1D-myo-inositol 1,2,3,4,6-pentakisphosphate + ADP. Its pathway is phospholipid metabolism; phosphatidylinositol metabolism. With respect to regulation, inhibited by flavonoids, including myricetin, quercetin, luteolin, isorhamnetin, rhamnetin, kaempferol, diosmetin and apigenin. Functionally, converts inositol hexakisphosphate (InsP6) to diphosphoinositol pentakisphosphate (InsP7/PP-InsP5). The sequence is that of Inositol hexakisphosphate kinase 2 from Homo sapiens (Human).